Reading from the N-terminus, the 110-residue chain is Large ribosomal subunit protein uL22 (110 aa).

This sequence belongs to the universal ribosomal protein uL22 family. As to quaternary structure, part of the 50S ribosomal subunit.

Functionally, this protein binds specifically to 23S rRNA; its binding is stimulated by other ribosomal proteins, e.g. L4, L17, and L20. It is important during the early stages of 50S assembly. It makes multiple contacts with different domains of the 23S rRNA in the assembled 50S subunit and ribosome. In terms of biological role, the globular domain of the protein is located near the polypeptide exit tunnel on the outside of the subunit, while an extended beta-hairpin is found that lines the wall of the exit tunnel in the center of the 70S ribosome. The sequence is that of Large ribosomal subunit protein uL22 from Syntrophobacter fumaroxidans (strain DSM 10017 / MPOB).